We begin with the raw amino-acid sequence, 175 residues long: Cuticle protein 16.5, isoform B (175 aa).

19 consecutive repeat copies span residues 17 to 20 (AAPA), 25 to 28 (AAPA), 31 to 34 (AAPA), 38 to 41 (AAPA), 44 to 47 (AAPA), 51 to 54 (AAPA), 57 to 60 (AAPA), 64 to 67 (AAPA), 70 to 73 (AAPA), 77 to 80 (AAPA), 83 to 86 (AAPA), 91 to 94 (AAPA), 99 to 102 (AAPA), 106 to 109 (AAPA), 134 to 137 (AAPA), 144 to 147 (AAPA), 151 to 154 (AAPA), 158 to 161 (AAPA), and 165 to 168 (AAPA).

Functionally, component of the cuticle of migratory locust which contains more than 100 different structural proteins. In Locusta migratoria (Migratory locust), this protein is Cuticle protein 16.5, isoform B.